We begin with the raw amino-acid sequence, 278 residues long: 4-hydroxy-tetrahydrodipicolinate reductase (278 aa).

Residues 13–18 and 111–113 each bind NAD(+); these read GAAGKM and GTT. The active-site Proton donor/acceptor is the His-167. Residue His-168 participates in (S)-2,3,4,5-tetrahydrodipicolinate binding. Lys-171 acts as the Proton donor in catalysis. (S)-2,3,4,5-tetrahydrodipicolinate is bound at residue 177–178; the sequence is GT.

This sequence belongs to the DapB family.

It is found in the cytoplasm. It carries out the reaction (S)-2,3,4,5-tetrahydrodipicolinate + NAD(+) + H2O = (2S,4S)-4-hydroxy-2,3,4,5-tetrahydrodipicolinate + NADH + H(+). The catalysed reaction is (S)-2,3,4,5-tetrahydrodipicolinate + NADP(+) + H2O = (2S,4S)-4-hydroxy-2,3,4,5-tetrahydrodipicolinate + NADPH + H(+). It functions in the pathway amino-acid biosynthesis; L-lysine biosynthesis via DAP pathway; (S)-tetrahydrodipicolinate from L-aspartate: step 4/4. Its function is as follows. Catalyzes the conversion of 4-hydroxy-tetrahydrodipicolinate (HTPA) to tetrahydrodipicolinate. The chain is 4-hydroxy-tetrahydrodipicolinate reductase from Nostoc sp. (strain PCC 7120 / SAG 25.82 / UTEX 2576).